The following is a 284-amino-acid chain: Protoheme IX farnesyltransferase (284 aa).

Transmembrane regions (helical) follow at residues 13–33 (VTVL…TGYP), 35–55 (LTVI…SFIL), 84–104 (FALL…TYFI), 106–126 (LLTA…YTIW), 134–154 (NIVI…AAMA), 163–183 (VMFL…AIFL), 205–225 (VNQI…FYFV), 229–249 (MGYL…GFAY), and 264–284 (FFFS…DSKI).

Belongs to the UbiA prenyltransferase family. Protoheme IX farnesyltransferase subfamily.

Its subcellular location is the cell inner membrane. The enzyme catalyses heme b + (2E,6E)-farnesyl diphosphate + H2O = Fe(II)-heme o + diphosphate. The protein operates within porphyrin-containing compound metabolism; heme O biosynthesis; heme O from protoheme: step 1/1. Functionally, converts heme B (protoheme IX) to heme O by substitution of the vinyl group on carbon 2 of heme B porphyrin ring with a hydroxyethyl farnesyl side group. This chain is Protoheme IX farnesyltransferase, found in Leptospira biflexa serovar Patoc (strain Patoc 1 / Ames).